The sequence spans 712 residues: DNA ligase (712 aa).

NAD(+) contacts are provided by residues 53-57, 103-104, and Glu-133; these read DAEFD and SL. The N6-AMP-lysine intermediate role is filled by Lys-135. Residues Arg-156, Glu-196, Lys-315, and Lys-339 each contribute to the NAD(+) site. Positions 433, 436, 452, and 458 each coordinate Zn(2+). A BRCT domain is found at 622 to 711; that stretch reads SIERTLEGLS…PERDAEDGEP (90 aa).

It belongs to the NAD-dependent DNA ligase family. LigA subfamily. Mg(2+) is required as a cofactor. It depends on Mn(2+) as a cofactor.

The catalysed reaction is NAD(+) + (deoxyribonucleotide)n-3'-hydroxyl + 5'-phospho-(deoxyribonucleotide)m = (deoxyribonucleotide)n+m + AMP + beta-nicotinamide D-nucleotide.. Functionally, DNA ligase that catalyzes the formation of phosphodiester linkages between 5'-phosphoryl and 3'-hydroxyl groups in double-stranded DNA using NAD as a coenzyme and as the energy source for the reaction. It is essential for DNA replication and repair of damaged DNA. This is DNA ligase from Mycolicibacterium gilvum (strain PYR-GCK) (Mycobacterium gilvum (strain PYR-GCK)).